Here is a 47-residue protein sequence, read N- to C-terminus: PhoP/PhoQ regulator MgrB (47 aa).

Residues 6 to 26 traverse the membrane as a helical segment; the sequence is WVVLVVVVLACLLLWAQVFNM.

This sequence belongs to the MgrB family. In terms of assembly, may form homooligomers. Probably interacts with the periplasmic domain of PhoQ.

The protein localises to the cell inner membrane. In terms of biological role, phoP-regulated transcription is redox-sensitive, being activated when the periplasm becomes more reducing. MgrB acts between DsbA/DsbB and PhoP/PhoQ in this pathway. Represses PhoP/PhoQ signaling, possibly by binding to the periplasmic domain of PhoQ, altering its activity and that of downstream effector PhoP. The chain is PhoP/PhoQ regulator MgrB from Escherichia coli O157:H7.